The following is a 503-amino-acid chain: Lysine--tRNA ligase (503 aa).

Residues glutamate 412 and glutamate 419 each contribute to the Mg(2+) site.

This sequence belongs to the class-II aminoacyl-tRNA synthetase family. Homodimer. It depends on Mg(2+) as a cofactor.

It is found in the cytoplasm. It catalyses the reaction tRNA(Lys) + L-lysine + ATP = L-lysyl-tRNA(Lys) + AMP + diphosphate. The polypeptide is Lysine--tRNA ligase (Buchnera aphidicola subsp. Schizaphis graminum (strain Sg)).